Reading from the N-terminus, the 342-residue chain is Global transcription regulator FGP1 (342 aa).

A disordered region spans residues 91–113 (FSPGEKKRASKKPKKQAGVAKAY).

It belongs to the MIT1/WOR1 family.

The protein localises to the nucleus. Global transcriptional regulator of pathogenicity. Regulates many genes during growth in putrescine medium and during infection. Involved in the developmental processes of conidium formation and sexual reproduction and modulates a morphological change that accompanies mycotoxin production. In Gibberella zeae (strain ATCC MYA-4620 / CBS 123657 / FGSC 9075 / NRRL 31084 / PH-1) (Wheat head blight fungus), this protein is Global transcription regulator FGP1.